We begin with the raw amino-acid sequence, 433 residues long: Transcriptional enhancer factor TEF-5 (433 aa).

Positions 1–12 are enriched in polar residues; sequence MASNSWNASSSP. Positions 1–35 are disordered; the sequence is MASNSWNASSSPGEGREDGQDGMDKSLDNDAEGVW. A compositionally biased stretch (basic and acidic residues) spans 14–28; that stretch reads EGREDGQDGMDKSLD. The TEA DNA-binding region spans 28 to 104; that stretch reads DNDAEGVWSP…QVLARREISG (77 aa). A transcriptional activation region spans residues 171–433; sequence GPSQDIKPFA…QHHVYKLVKD (263 aa).

High levels in cardiac muscle, low in skeletal muscle. Intermediate levels in gizzard and lung, low levels in kidney.

Its subcellular location is the nucleus. Its function is as follows. Transcription factor which plays a key role in the Hippo signaling pathway, a pathway involved in organ size control and tumor suppression by restricting proliferation and promoting apoptosis. The core of this pathway is composed of a kinase cascade wherein MST1/MST2, in complex with its regulatory protein SAV1, phosphorylates and activates LATS1/2 in complex with its regulatory protein MOB1, which in turn phosphorylates and inactivates YAP1 oncoprotein and WWTR1/TAZ. This is Transcriptional enhancer factor TEF-5 (TEAD3) from Gallus gallus (Chicken).